The chain runs to 286 residues: MTALTESSTSKFLNIKEKGLSDFKIHYNEAGNGETVIMLHGGGPGAGGWSNYYRNIGPFVEAGYRVILKDSPGFNKSDAVVMDEQRGLVNARAVKGLMDALGIDRAHLVGNSMGGATALNFAIEYPDRIGKLILMGPGGLGPSMFAPMPLEGIKLLFKLYAEPSYENLKQMIQVFLYDQSLITEELLQGRWEAIQRQPEHLKNFLISAQKAPLSTWDVTARLGEIKAKTFITWGRDDRFVPLDHGLKLLWNIDDARLHVFSKCGHWAQWEHADEFNRLAIDFLRQA.

Residues 42-43 (GG), asparagine 51, asparagine 111, serine 180, and arginine 190 each bind substrate. Histidine 265 functions as the Proton acceptor in the catalytic mechanism. A substrate-binding site is contributed by tryptophan 266.

Belongs to the AB hydrolase superfamily. BphD family. In terms of assembly, homodimer.

It carries out the reaction 2,6-dioxo-6-phenylhexa-3-enoate + H2O = 2-oxopent-4-enoate + benzoate + H(+). Its pathway is xenobiotic degradation; biphenyl degradation; 2-hydroxy-2,4-pentadienoate and benzoate from biphenyl: step 4/4. Functionally, catalyzes an unusual C-C bond hydrolysis of 2-hydroxy-6-oxo-6-phenylhexa-2,4-dienoic acid (HOPDA) to produce benzoic acid and 2-hydroxy-2,4-pentadienoic acid (HPD). In Pseudomonas putida (Arthrobacter siderocapsulatus), this protein is 2-hydroxy-6-oxo-6-phenylhexa-2,4-dienoate hydrolase (bphD).